The primary structure comprises 206 residues: tRNA(Phe) 7-((3-amino-3-carboxypropyl)-4-demethylwyosine(37)-N(4))-methyltransferase 2 (206 aa).

It belongs to the TYW3 family.

It carries out the reaction 4-demethyl-7-[(3S)-3-amino-3-carboxypropyl]wyosine(37) in tRNA(Phe) + S-adenosyl-L-methionine = 7-[(3S)-3-amino-3-carboxypropyl]wyosine(37) in tRNA(Phe) + S-adenosyl-L-homocysteine + H(+). S-adenosyl-L-methionine-dependent methyltransferase that acts as a component of the wyosine derivatives biosynthesis pathway. Probably methylates N-4 position of wybutosine-86 to produce wybutosine-72. The sequence is that of tRNA(Phe) 7-((3-amino-3-carboxypropyl)-4-demethylwyosine(37)-N(4))-methyltransferase 2 from Pyrococcus horikoshii (strain ATCC 700860 / DSM 12428 / JCM 9974 / NBRC 100139 / OT-3).